Here is a 320-residue protein sequence, read N- to C-terminus: Lipoyl synthase (320 aa).

The disordered stretch occupies residues 1–27 (MRVEIDHRNSGGGKLRHPEKQHRPDNP). Positions 16-25 (RHPEKQHRPD) are enriched in basic and acidic residues. 7 residues coordinate [4Fe-4S] cluster: cysteine 61, cysteine 66, cysteine 72, cysteine 87, cysteine 91, cysteine 94, and serine 300. The Radical SAM core domain occupies 73-289 (WSQRHATMMI…AAMARAKGFL (217 aa)).

It belongs to the radical SAM superfamily. Lipoyl synthase family. The cofactor is [4Fe-4S] cluster.

The protein resides in the cytoplasm. It carries out the reaction [[Fe-S] cluster scaffold protein carrying a second [4Fe-4S](2+) cluster] + N(6)-octanoyl-L-lysyl-[protein] + 2 oxidized [2Fe-2S]-[ferredoxin] + 2 S-adenosyl-L-methionine + 4 H(+) = [[Fe-S] cluster scaffold protein] + N(6)-[(R)-dihydrolipoyl]-L-lysyl-[protein] + 4 Fe(3+) + 2 hydrogen sulfide + 2 5'-deoxyadenosine + 2 L-methionine + 2 reduced [2Fe-2S]-[ferredoxin]. It participates in protein modification; protein lipoylation via endogenous pathway; protein N(6)-(lipoyl)lysine from octanoyl-[acyl-carrier-protein]: step 2/2. Its function is as follows. Catalyzes the radical-mediated insertion of two sulfur atoms into the C-6 and C-8 positions of the octanoyl moiety bound to the lipoyl domains of lipoate-dependent enzymes, thereby converting the octanoylated domains into lipoylated derivatives. The polypeptide is Lipoyl synthase (Acidiphilium cryptum (strain JF-5)).